The chain runs to 284 residues: Neutral protease 2 homolog AFLA_119780 (284 aa).

Intrachain disulfides connect Cys113/Cys185 and Cys192/Cys210. Residue His235 coordinates Zn(2+). Glu236 is an active-site residue. His239 and Asp250 together coordinate Zn(2+).

The protein belongs to the peptidase M35 family. The cofactor is Zn(2+).

The protein localises to the secreted. The catalysed reaction is Preferential cleavage of bonds with hydrophobic residues in P1'. Also 3-Asn-|-Gln-4 and 8-Gly-|-Ser-9 bonds in insulin B chain.. Secreted metalloproteinase that allows assimilation of proteinaceous substrates. Shows high activities on basic nuclear substrates such as histone and protamine. The protein is Neutral protease 2 homolog AFLA_119780 of Aspergillus flavus (strain ATCC 200026 / FGSC A1120 / IAM 13836 / NRRL 3357 / JCM 12722 / SRRC 167).